The primary structure comprises 918 residues: Calcium-transporting ATPase type 2C member 1 (918 aa).

Over 1–78 (MKVARFQKIP…EPLWKKYISQ (78 aa)) the chain is Cytoplasmic. Residues 79 to 95 (FKNPLIMLLLASAVISI) traverse the membrane as a helical segment. Residues 96-99 (LMRQ) are Extracellular-facing. A helical membrane pass occupies residues 100 to 121 (FDDAVSITVAIVIVVTVAFVQE). Residues 122-262 (YRSEKSLEEL…PKTPLQKSMD (141 aa)) lie on the Cytoplasmic side of the membrane. The chain crosses the membrane as a helical span at residues 263-282 (LLGKQLSFYSFGIIGIIMLV). Topologically, residues 283-294 (GWLLGKDILEMF) are extracellular. Residues 295–316 (TISVSLAVAAIPEGLPIVVTVT) traverse the membrane as a helical segment. Topologically, residues 317-699 (LALGVMRMVK…EGKGIYNNIK (383 aa)) are cytoplasmic. Catalysis depends on D349, which acts as the 4-aspartylphosphate intermediate. Residues D643 and D647 each coordinate Mg(2+). The helical transmembrane segment at 700–722 (NFVRFQLSTSIAALTLISLATLM) threads the bilayer. Over 723-727 (NFPNP) the chain is Extracellular. A helical membrane pass occupies residues 728 to 751 (LNAMQILWINIIMDGPPAQSLGVE). Residues 752-775 (PVDKDVIRKPPRNWKDSILTKNLI) are Cytoplasmic-facing. Residues 776 to 794 (LKILVSSIIIVCGTLFVFW) traverse the membrane as a helical segment. Topologically, residues 795 to 801 (RELRDNV) are extracellular. The helical transmembrane segment at 802–827 (ITPRDTTMTFTCFVFFDMFNALSSRS) threads the bilayer. Topologically, residues 828 to 842 (QTKSVFEIGLCSNKM) are cytoplasmic. A helical membrane pass occupies residues 843 to 862 (FCYAVLGSIMGQLLVIYFPP). Over 863-875 (LQKVFQTESLSIL) the chain is Extracellular. The chain crosses the membrane as a helical span at residues 876 to 892 (DLLFLLGLTSSVCIVSE). At 893 to 918 (IIKKVERSREKVQKNAGSASSSFLEV) the chain is on the cytoplasmic side.

This sequence belongs to the cation transport ATPase (P-type) (TC 3.A.3) family. Type IIA subfamily. Monomer. Homodimer. As to expression, expressed in hippocampal neurons in the CA3 region of the Amon's horn (at protein level). Expressed in brain, heart, lung, stomach, liver, colon and mammary gland.

It is found in the golgi apparatus. It localises to the trans-Golgi network membrane. The protein resides in the golgi stack membrane. The enzyme catalyses Ca(2+)(in) + ATP + H2O = Ca(2+)(out) + ADP + phosphate + H(+). The catalysed reaction is Mn(2+)(in) + ATP + H2O = Mn(2+)(out) + ADP + phosphate + H(+). Its function is as follows. ATP-driven pump that supplies the Golgi apparatus with Ca(2+) and Mn(2+) ions, both essential cofactors for processing and trafficking of newly synthesized proteins in the secretory pathway. Within a catalytic cycle, acquires Ca(2+) or Mn(2+) ions on the cytoplasmic side of the membrane and delivers them to the lumenal side. The transfer of ions across the membrane is coupled to ATP hydrolysis and is associated with a transient phosphorylation that shifts the pump conformation from inward-facing to outward-facing state. Plays a primary role in the maintenance of Ca(2+) homeostasis in the trans-Golgi compartment with a functional impact on Golgi and post-Golgi protein sorting as well as a structural impact on cisternae morphology. Responsible for loading the Golgi stores with Ca(2+) ions in keratinocytes, contributing to keratinocyte differentiation and epidermis integrity. Participates in Ca(2+) and Mn(2+) ions uptake into the Golgi store of hippocampal neurons and regulates protein trafficking required for neural polarity. May also play a role in the maintenance of Ca(2+) and Mn(2+) homeostasis and signaling in the cytosol while preventing cytotoxicity. The sequence is that of Calcium-transporting ATPase type 2C member 1 from Mus musculus (Mouse).